The sequence spans 151 residues: UPF0178 protein Shal_3046 (151 aa).

This sequence belongs to the UPF0178 family.

This Shewanella halifaxensis (strain HAW-EB4) protein is UPF0178 protein Shal_3046.